A 303-amino-acid polypeptide reads, in one-letter code: BAG family molecular chaperone regulator 3 (303 aa).

Residues 1–11 (MMKMNTGTSPS) are compositionally biased toward polar residues. The interval 1–27 (MMKMNTGTSPSVIGGGTSGNEWESRPG) is disordered. One can recognise a Ubiquitin-like domain in the interval 45–119 (FRVRVKYGSV…LVVKEDPISQ (75 aa)). In terms of domain architecture, BAG spans 138–216 (SISDISFEVD…KYVEALDLLK (79 aa)). Residues 249 to 268 (VEEEEEEPRNSNASSSSGTP) are disordered. Residues 258–267 (NSNASSSSGT) show a composition bias toward polar residues. S263 carries the post-translational modification Phosphoserine.

As to quaternary structure, binds to the ATPase domain of HSP70/HSC70 chaperones. Interacts with HSP70-1.

Co-chaperone that regulates diverse cellular pathways, such as programmed cell death and stress responses. This Arabidopsis thaliana (Mouse-ear cress) protein is BAG family molecular chaperone regulator 3 (BAG3).